The sequence spans 323 residues: Transcription factor LUX (323 aa).

Disordered stretches follow at residues Met1–Gly25, Glu53–Gly139, and Gly267–Pro298. Low complexity predominate over residues Ser65 to Asn87. A DNA-binding region (myb-like GARP) is located at residues Gly139–Lys200.

Interacts with ELF3 and forms a complex with ELF3 and ELF4.

The protein resides in the nucleus. Its function is as follows. Transcription factor that is essential for the generation of the circadian clock oscillation. Is necessary for activation of CCA1 and LHY expression. Is coregulated with TOC1 and seems to be repressed by CCA1 and LHY by direct binding of these proteins to the evening element in the LUX promoter. Directly regulates the expression of PRR9, a major component of the morning transcriptional feedback circuit, by binding specific sites on PRR9 promoter. Binds to its own promoter, inducing a negative auto-regulatory feedback loop within the core clock. Binds to ELF3 and associates with ELF4 in a diurnal complex which is required for the expression of the growth-promoting transcription factors PIF4 and PIF5 and subsequent hypocotyl growth in the early evening. The chain is Transcription factor LUX (LUX) from Arabidopsis thaliana (Mouse-ear cress).